The chain runs to 149 residues: Large ribosomal subunit protein uL16c (149 aa).

Belongs to the universal ribosomal protein uL16 family. In terms of assembly, part of the 50S ribosomal subunit.

Its subcellular location is the plastid. The protein resides in the organellar chromatophore. The polypeptide is Large ribosomal subunit protein uL16c (rpl16) (Paulinella chromatophora).